The chain runs to 380 residues: Transaldolase (380 aa).

Catalysis depends on lysine 141, which acts as the Schiff-base intermediate with substrate.

The protein belongs to the transaldolase family. Type 2 subfamily.

Its subcellular location is the cytoplasm. The catalysed reaction is D-sedoheptulose 7-phosphate + D-glyceraldehyde 3-phosphate = D-erythrose 4-phosphate + beta-D-fructose 6-phosphate. It participates in carbohydrate degradation; pentose phosphate pathway; D-glyceraldehyde 3-phosphate and beta-D-fructose 6-phosphate from D-ribose 5-phosphate and D-xylulose 5-phosphate (non-oxidative stage): step 2/3. In terms of biological role, transaldolase is important for the balance of metabolites in the pentose-phosphate pathway. The chain is Transaldolase from Trichodesmium erythraeum (strain IMS101).